The chain runs to 230 residues: Somatolactin (230 aa).

Residues Met1 to Ser23 form the signal peptide. Cystine bridges form between Cys28/Cys38, Cys88/Cys204, and Cys221/Cys229. N-linked (GlcNAc...) asparagine glycans are attached at residues Asn137 and Asn144.

Belongs to the somatotropin/prolactin family.

It localises to the secreted. This Hippoglossus hippoglossus (Atlantic halibut) protein is Somatolactin.